We begin with the raw amino-acid sequence, 182 residues long: Lipoprotein signal peptidase (182 aa).

3 helical membrane passes run 21 to 41 (LLLSVAATVLALDIVTKVLAV), 74 to 94 (GYTWVLTLIATGVVVGIFWMG), and 98 to 118 (VSPWWAVGLGMILGGAMGNLV). Catalysis depends on residues D134 and D148. A helical membrane pass occupies residues 146–166 (VADPSVVGGAILLVVLSIFGY).

It belongs to the peptidase A8 family.

It localises to the cell membrane. It catalyses the reaction Release of signal peptides from bacterial membrane prolipoproteins. Hydrolyzes -Xaa-Yaa-Zaa-|-(S,diacylglyceryl)Cys-, in which Xaa is hydrophobic (preferably Leu), and Yaa (Ala or Ser) and Zaa (Gly or Ala) have small, neutral side chains.. The protein operates within protein modification; lipoprotein biosynthesis (signal peptide cleavage). This protein specifically catalyzes the removal of signal peptides from prolipoproteins. In Mycobacterium avium (strain 104), this protein is Lipoprotein signal peptidase.